A 274-amino-acid polypeptide reads, in one-letter code: Pantothenate synthetase (274 aa).

27–34 provides a ligand contact to ATP; that stretch reads MGALHKGH. The active-site Proton donor is the His34. (R)-pantoate is bound at residue Gln58. Gln58 lines the beta-alanine pocket. 145–148 provides a ligand contact to ATP; sequence GQKD. Gln151 is a (R)-pantoate binding site. Residue 182–185 coordinates ATP; sequence LSSR.

It belongs to the pantothenate synthetase family. Homodimer.

The protein localises to the cytoplasm. The catalysed reaction is (R)-pantoate + beta-alanine + ATP = (R)-pantothenate + AMP + diphosphate + H(+). It participates in cofactor biosynthesis; (R)-pantothenate biosynthesis; (R)-pantothenate from (R)-pantoate and beta-alanine: step 1/1. Its function is as follows. Catalyzes the condensation of pantoate with beta-alanine in an ATP-dependent reaction via a pantoyl-adenylate intermediate. This chain is Pantothenate synthetase, found in Wolinella succinogenes (strain ATCC 29543 / DSM 1740 / CCUG 13145 / JCM 31913 / LMG 7466 / NCTC 11488 / FDC 602W) (Vibrio succinogenes).